We begin with the raw amino-acid sequence, 197 residues long: Dephospho-CoA kinase (197 aa).

The 196-residue stretch at 2 to 197 (IIGLTGGIGS…HTKYMELLNE (196 aa)) folds into the DPCK domain. 10-15 (GSGKSA) is a binding site for ATP.

Belongs to the CoaE family.

Its subcellular location is the cytoplasm. It carries out the reaction 3'-dephospho-CoA + ATP = ADP + CoA + H(+). Its pathway is cofactor biosynthesis; coenzyme A biosynthesis; CoA from (R)-pantothenate: step 5/5. In terms of biological role, catalyzes the phosphorylation of the 3'-hydroxyl group of dephosphocoenzyme A to form coenzyme A. The protein is Dephospho-CoA kinase of Gamma-proteobacterium EBAC31A08.